A 238-amino-acid chain; its full sequence is Purine nucleoside phosphorylase DeoD-type (238 aa).

His-4 provides a ligand contact to a purine D-ribonucleoside. Phosphate contacts are provided by residues Gly-20, Arg-24, Arg-43, and 87–90; that span reads RVGS. A purine D-ribonucleoside contacts are provided by residues 179–181 and 203–204; these read EME and SD. Asp-204 functions as the Proton donor in the catalytic mechanism.

Belongs to the PNP/UDP phosphorylase family. As to quaternary structure, homohexamer; trimer of homodimers.

The enzyme catalyses a purine D-ribonucleoside + phosphate = a purine nucleobase + alpha-D-ribose 1-phosphate. It catalyses the reaction a purine 2'-deoxy-D-ribonucleoside + phosphate = a purine nucleobase + 2-deoxy-alpha-D-ribose 1-phosphate. Functionally, catalyzes the reversible phosphorolytic breakdown of the N-glycosidic bond in the beta-(deoxy)ribonucleoside molecules, with the formation of the corresponding free purine bases and pentose-1-phosphate. The chain is Purine nucleoside phosphorylase DeoD-type from Histophilus somni (strain 129Pt) (Haemophilus somnus).